Reading from the N-terminus, the 281-residue chain is Para-Rep C9 (281 aa).

Positions 1–95 (MSAVNWVFTL…VAGPWSYGEL (95 aa)) constitute a CRESS-DNA virus Rep endonuclease domain. An RCR-1 motif is present at residues 7 to 10 (VFTL). Residues glutamate 33 and histidine 39 each contribute to the a divalent metal cation site. The short motif at 39-41 (HIQ) is the RCR-2 element. The short motif at 48–69 (KKAKMNTVKNIIGGNPHLEKMK) is the Nuclear localization signal element. Tyrosine 78 functions as the For DNA cleavage activity in the catalytic mechanism. An RCR-3 motif is present at residues 78 to 81 (YAQK). Position 83 (glutamate 83) interacts with a divalent metal cation. Residues 95–101 (LLKKGSH) carry the Nuclear localization signal motif. 178-180 (GKS) is a binding site for ATP.

It belongs to the nanoviridea/circoviridae replication-associated protein family. Homooligomer (Potential). Rep binds to repeated DNA motifs (iterons). It depends on Mg(2+) as a cofactor. Mn(2+) serves as cofactor.

The protein localises to the host nucleus. It catalyses the reaction ATP + H2O = ADP + phosphate + H(+). Initiates and terminates the replication only of its own subviral DNA molecule. The closed circular ssDNA genome is first converted to a superhelical dsDNA. Rep binds a specific hairpin at the genome origin of replication. Introduces an endonucleolytic nick within the intergenic region of the genome, thereby initiating the rolling circle replication (RCR). Following cleavage, binds covalently to the 5'-phosphate of DNA as a tyrosyl ester. The cleavage gives rise to a free 3'-OH that serves as a primer for the cellular DNA polymerase. The polymerase synthesizes the (+) strand DNA by rolling circle mechanism. After one round of replication, a Rep-catalyzed nucleotidyl transfer reaction releases a circular single-stranded virus genome, thereby terminating the replication. Displays origin-specific DNA cleavage, nucleotidyl transferase, ATPase and helicase activities. This is Para-Rep C9 (C9) from Faba bean necrotic yellows C9 alphasatellite (FBNYC9A).